The chain runs to 102 residues: MANKKIRIRLKAYEHRTLDTAAEKIVETATRTGATVAGPVPLPTERSLYTIIRATHKYKDSREQFEMRTHKRLIDIVNPTQKTVDALMKLDLPSGVNVEIKL.

This sequence belongs to the universal ribosomal protein uS10 family. As to quaternary structure, part of the 30S ribosomal subunit.

Its function is as follows. Involved in the binding of tRNA to the ribosomes. The polypeptide is Small ribosomal subunit protein uS10 (Streptococcus uberis (strain ATCC BAA-854 / 0140J)).